We begin with the raw amino-acid sequence, 178 residues long: Fatty-acid and retinol-binding protein 1 (178 aa).

An N-terminal signal peptide occupies residues 1–16 (MYHQLILMALIGVIMA). 2 N-linked (GlcNAc...) asparagine glycosylation sites follow: Asn-44 and Asn-75. 2 coiled-coil regions span residues 67-89 (DAAL…ELRN) and 123-153 (KLDV…ELKA). Asn-157 carries N-linked (GlcNAc...) asparagine glycosylation.

This sequence belongs to the fatty-acid and retinol-binding protein (FARBP) family. Post-translationally, N-glycosylated.

It is found in the secreted. Functionally, binds retinol and different fatty acids. This is Fatty-acid and retinol-binding protein 1 from Acanthocheilonema viteae (Filarial nematode worm).